Reading from the N-terminus, the 144-residue chain is Sirohydrochlorin cobaltochelatase (144 aa).

Histidine 9 (proton acceptor) is an active-site residue. A Co(2+)-binding site is contributed by histidine 9. Histidine 9 is a Ni(2+) binding site. Residues glutamate 45 and 70-75 contribute to the substrate site; that span reads LAPGNH. Residue histidine 75 participates in Co(2+) binding. Ni(2+) is bound at residue histidine 75. Residues 89–112 form a disordered region; it reads GDDEGGHHHHHDHEHHHHHHDTTA. A compositionally biased stretch (basic residues) spans 95–108; the sequence is HHHHHDHEHHHHHH.

The protein belongs to the CbiX family. CbiXS subfamily. In terms of assembly, homotetramer; dimer of dimers.

It carries out the reaction Co-sirohydrochlorin + 2 H(+) = sirohydrochlorin + Co(2+). The catalysed reaction is Ni-sirohydrochlorin + 2 H(+) = sirohydrochlorin + Ni(2+). Its pathway is cofactor biosynthesis; adenosylcobalamin biosynthesis; cob(II)yrinate a,c-diamide from sirohydrochlorin (anaerobic route): step 1/10. Functionally, catalyzes the insertion of Co(2+) into sirohydrochlorin as part of the anaerobic pathway to cobalamin biosynthesis. Involved in the biosynthesis of the unique nickel-containing tetrapyrrole coenzyme F430, the prosthetic group of methyl-coenzyme M reductase (MCR), which plays a key role in methanogenesis and anaerobic methane oxidation. Catalyzes the insertion of Ni(2+) into sirohydrochlorin to yield Ni-sirohydrochlorin. In Methanococcus maripaludis (strain DSM 14266 / JCM 13030 / NBRC 101832 / S2 / LL), this protein is Sirohydrochlorin cobaltochelatase.